The chain runs to 178 residues: ATP synthase subunit delta (178 aa).

Belongs to the ATPase delta chain family. In terms of assembly, F-type ATPases have 2 components, F(1) - the catalytic core - and F(0) - the membrane proton channel. F(1) has five subunits: alpha(3), beta(3), gamma(1), delta(1), epsilon(1). F(0) has three main subunits: a(1), b(2) and c(10-14). The alpha and beta chains form an alternating ring which encloses part of the gamma chain. F(1) is attached to F(0) by a central stalk formed by the gamma and epsilon chains, while a peripheral stalk is formed by the delta and b chains.

Its subcellular location is the cell membrane. F(1)F(0) ATP synthase produces ATP from ADP in the presence of a proton or sodium gradient. F-type ATPases consist of two structural domains, F(1) containing the extramembraneous catalytic core and F(0) containing the membrane proton channel, linked together by a central stalk and a peripheral stalk. During catalysis, ATP synthesis in the catalytic domain of F(1) is coupled via a rotary mechanism of the central stalk subunits to proton translocation. In terms of biological role, this protein is part of the stalk that links CF(0) to CF(1). It either transmits conformational changes from CF(0) to CF(1) or is implicated in proton conduction. In Desulfitobacterium hafniense (strain Y51), this protein is ATP synthase subunit delta.